A 444-amino-acid polypeptide reads, in one-letter code: Ribulose bisphosphate carboxylase large chain (444 aa).

Lys-5 is subject to N6,N6,N6-trimethyllysine. Asn-114 and Thr-164 together coordinate substrate. Lys-166 serves as the catalytic Proton acceptor. Lys-168 provides a ligand contact to substrate. The Mg(2+) site is built by Lys-192, Asp-194, and Glu-195. Lys-192 is modified (N6-carboxylysine). His-285 functions as the Proton acceptor in the catalytic mechanism. Positions 286, 318, and 370 each coordinate substrate.

The protein belongs to the RuBisCO large chain family. Type I subfamily. As to quaternary structure, heterohexadecamer of 8 large chains and 8 small chains; disulfide-linked. The disulfide link is formed within the large subunit homodimers. Mg(2+) is required as a cofactor. In terms of processing, the disulfide bond which can form in the large chain dimeric partners within the hexadecamer appears to be associated with oxidative stress and protein turnover.

It is found in the plastid. The protein resides in the chloroplast. The catalysed reaction is 2 (2R)-3-phosphoglycerate + 2 H(+) = D-ribulose 1,5-bisphosphate + CO2 + H2O. The enzyme catalyses D-ribulose 1,5-bisphosphate + O2 = 2-phosphoglycolate + (2R)-3-phosphoglycerate + 2 H(+). In terms of biological role, ruBisCO catalyzes two reactions: the carboxylation of D-ribulose 1,5-bisphosphate, the primary event in carbon dioxide fixation, as well as the oxidative fragmentation of the pentose substrate in the photorespiration process. Both reactions occur simultaneously and in competition at the same active site. This is Ribulose bisphosphate carboxylase large chain from Botrychium strictum (Fern).